A 273-amino-acid polypeptide reads, in one-letter code: Putative pyruvate, phosphate dikinase regulatory protein (273 aa).

An ADP-binding site is contributed by G153 to S160.

It belongs to the pyruvate, phosphate/water dikinase regulatory protein family. PDRP subfamily.

The catalysed reaction is N(tele)-phospho-L-histidyl/L-threonyl-[pyruvate, phosphate dikinase] + ADP = N(tele)-phospho-L-histidyl/O-phospho-L-threonyl-[pyruvate, phosphate dikinase] + AMP + H(+). It catalyses the reaction N(tele)-phospho-L-histidyl/O-phospho-L-threonyl-[pyruvate, phosphate dikinase] + phosphate + H(+) = N(tele)-phospho-L-histidyl/L-threonyl-[pyruvate, phosphate dikinase] + diphosphate. Functionally, bifunctional serine/threonine kinase and phosphorylase involved in the regulation of the pyruvate, phosphate dikinase (PPDK) by catalyzing its phosphorylation/dephosphorylation. This Ehrlichia canis (strain Jake) protein is Putative pyruvate, phosphate dikinase regulatory protein.